Here is a 182-residue protein sequence, read N- to C-terminus: Transcription termination/antitermination protein NusG (182 aa).

One can recognise a KOW domain in the interval 131–163 (VGEQVRIQSGPFANQIGEVQEIEADKFKLTVLV).

This sequence belongs to the NusG family.

In terms of biological role, participates in transcription elongation, termination and antitermination. This Staphylococcus epidermidis (strain ATCC 35984 / DSM 28319 / BCRC 17069 / CCUG 31568 / BM 3577 / RP62A) protein is Transcription termination/antitermination protein NusG.